Here is a 117-residue protein sequence, read N- to C-terminus: ATP-dependent Clp protease adapter protein ClpS 1 (117 aa).

The interval Met1 to Thr33 is disordered.

Belongs to the ClpS family. Binds to the N-terminal domain of the chaperone ClpA.

Its function is as follows. Involved in the modulation of the specificity of the ClpAP-mediated ATP-dependent protein degradation. This is ATP-dependent Clp protease adapter protein ClpS 1 from Rhizobium meliloti (strain 1021) (Ensifer meliloti).